Here is a 166-residue protein sequence, read N- to C-terminus: Ribosome maturation factor RimP (166 aa).

This sequence belongs to the RimP family.

It localises to the cytoplasm. Required for maturation of 30S ribosomal subunits. This Psychrobacter sp. (strain PRwf-1) protein is Ribosome maturation factor RimP.